Consider the following 294-residue polypeptide: Nucleoside-specific channel-forming protein Tsx (294 aa).

Residues 1 to 22 (MKKTLLAASAVVALSASFTAGA) form the signal peptide.

It belongs to the nucleoside-specific channel-forming outer membrane porin (Tsx) (TC 1.B.10) family.

It is found in the cell outer membrane. Functions as a substrate-specific channel for nucleosides and deoxynucleosides. Also functions in albicidin uptake and as receptor for colicin K. Also is a receptor for several Tsx-specific bacteriophages. The sequence is that of Nucleoside-specific channel-forming protein Tsx from Klebsiella aerogenes (strain ATCC 13048 / DSM 30053 / CCUG 1429 / JCM 1235 / KCTC 2190 / NBRC 13534 / NCIMB 10102 / NCTC 10006 / CDC 819-56) (Enterobacter aerogenes).